The sequence spans 346 residues: Protein tas (346 aa).

The active-site Proton donor is the Y53. 234–244 (SCLGFGTLTGK) is a binding site for NADP(+).

It belongs to the aldo/keto reductase family. Aldo/keto reductase 2 subfamily.

The chain is Protein tas (tas) from Escherichia coli (strain K12).